Here is a 430-residue protein sequence, read N- to C-terminus: Glutamate-1-semialdehyde 2,1-aminomutase (430 aa).

An N6-(pyridoxal phosphate)lysine modification is found at Lys267.

This sequence belongs to the class-III pyridoxal-phosphate-dependent aminotransferase family. HemL subfamily. Homodimer. Pyridoxal 5'-phosphate is required as a cofactor.

The protein localises to the cytoplasm. The catalysed reaction is (S)-4-amino-5-oxopentanoate = 5-aminolevulinate. The protein operates within porphyrin-containing compound metabolism; protoporphyrin-IX biosynthesis; 5-aminolevulinate from L-glutamyl-tRNA(Glu): step 2/2. The sequence is that of Glutamate-1-semialdehyde 2,1-aminomutase from Anaeromyxobacter dehalogenans (strain 2CP-C).